Here is a 254-residue protein sequence, read N- to C-terminus: Alcohol dehydrogenase (254 aa).

10-33 (FVAGLGGIGLDTNREIVKSGPKNL) serves as a coordination point for NAD(+). Serine 138 contacts substrate. Tyrosine 151 functions as the Proton acceptor in the catalytic mechanism.

It belongs to the short-chain dehydrogenases/reductases (SDR) family. Homodimer.

It catalyses the reaction a primary alcohol + NAD(+) = an aldehyde + NADH + H(+). The enzyme catalyses a secondary alcohol + NAD(+) = a ketone + NADH + H(+). In Scaptomyza albovittata (Fruit fly), this protein is Alcohol dehydrogenase (Adh).